The primary structure comprises 331 residues: Probable leucine carboxyl methyltransferase 1 (331 aa).

S-adenosyl-L-methionine-binding positions include Arg-82, Gly-107, Asp-131, 179-180 (DL), and Glu-206.

Belongs to the methyltransferase superfamily. LCMT family.

It carries out the reaction [phosphatase 2A protein]-C-terminal L-leucine + S-adenosyl-L-methionine = [phosphatase 2A protein]-C-terminal L-leucine methyl ester + S-adenosyl-L-homocysteine. Functionally, methylates the carboxyl group of the C-terminal leucine residue of protein phosphatase 2A catalytic subunits to form alpha-leucine ester residues. The chain is Probable leucine carboxyl methyltransferase 1 from Caenorhabditis briggsae.